The sequence spans 298 residues: Ribosomal RNA small subunit methyltransferase H (298 aa).

S-adenosyl-L-methionine is bound by residues Gly38–His40, Asp57, Phe84, Asp100, and Gln107.

This sequence belongs to the methyltransferase superfamily. RsmH family.

The protein localises to the cytoplasm. It catalyses the reaction cytidine(1402) in 16S rRNA + S-adenosyl-L-methionine = N(4)-methylcytidine(1402) in 16S rRNA + S-adenosyl-L-homocysteine + H(+). In terms of biological role, specifically methylates the N4 position of cytidine in position 1402 (C1402) of 16S rRNA. The polypeptide is Ribosomal RNA small subunit methyltransferase H (Acaryochloris marina (strain MBIC 11017)).